A 183-amino-acid polypeptide reads, in one-letter code: Putative 3-methyladenine DNA glycosylase (183 aa).

The protein belongs to the DNA glycosylase MPG family.

This is Putative 3-methyladenine DNA glycosylase from Rickettsia africae (strain ESF-5).